Here is a 662-residue protein sequence, read N- to C-terminus: Protein-arginine deiminase type-1 (662 aa).

Ca(2+)-binding residues include Asn153, Asp155, Asp157, Asp164, Asp175, Asp178, Gln350, Glu352, Lys363, Asp370, Ser371, Asn374, Phe408, and Leu411. Cys644 acts as the Nucleophile in catalysis.

This sequence belongs to the protein arginine deiminase family. Monomer. The cofactor is Ca(2+). Expressed only in the epidermis and uterus.

The protein resides in the cytoplasm. The catalysed reaction is L-arginyl-[protein] + H2O = L-citrullyl-[protein] + NH4(+). Functionally, catalyzes the deimination of arginine residues of proteins. The protein is Protein-arginine deiminase type-1 (Padi1) of Mus musculus (Mouse).